We begin with the raw amino-acid sequence, 224 residues long: Peptidyl-prolyl cis-trans isomerase FKBP3 (224 aa).

N-acetylalanine is present on alanine 2. The residue at position 36 (serine 36) is a Phosphoserine. A disordered region spans residues 88–118 (VKLSDDKPKDSKSEETLDEGPPKYTKSILKK). The segment covering 89-102 (KLSDDKPKDSKSEE) has biased composition (basic and acidic residues). Lysine 99 carries the post-translational modification N6-acetyllysine. The 97-residue stretch at 128–224 (GDVVHCWYTG…IFEVELVDID (97 aa)) folds into the PPIase FKBP-type domain. Serine 152 carries the phosphoserine modification. Lysine 170 is subject to N6-acetyllysine.

Belongs to the FKBP-type PPIase family.

The protein localises to the nucleus. It catalyses the reaction [protein]-peptidylproline (omega=180) = [protein]-peptidylproline (omega=0). With respect to regulation, inhibited preferentially by rapamycin over FK506. FK506- and rapamycin-binding proteins (FKBPs) constitute a family of receptors for the two immunosuppressants which inhibit T-cell proliferation by arresting two distinct cytoplasmic signal transmission pathways. PPIases accelerate the folding of proteins. In Mus musculus (Mouse), this protein is Peptidyl-prolyl cis-trans isomerase FKBP3 (Fkbp3).